A 119-amino-acid chain; its full sequence is Ribonuclease P protein component (119 aa).

It belongs to the RnpA family. In terms of assembly, consists of a catalytic RNA component (M1 or rnpB) and a protein subunit.

It carries out the reaction Endonucleolytic cleavage of RNA, removing 5'-extranucleotides from tRNA precursor.. Its function is as follows. RNaseP catalyzes the removal of the 5'-leader sequence from pre-tRNA to produce the mature 5'-terminus. It can also cleave other RNA substrates such as 4.5S RNA. The protein component plays an auxiliary but essential role in vivo by binding to the 5'-leader sequence and broadening the substrate specificity of the ribozyme. This Streptococcus pyogenes serotype M1 protein is Ribonuclease P protein component.